We begin with the raw amino-acid sequence, 451 residues long: POC1 centriolar protein homolog B (451 aa).

WD repeat units follow at residues 16–55 (GHKAAITSLDLSPNGKQLATASWDTFLMLWNFKPHARAYR), 58–99 (GHKD…SEFK), 101–139 (HTAPVRSVDFSADGQFLATASEDKSIKVWSMYRQRFLYS), 142–181 (RHTHWVRCAKFSPDGRLIVSCSEDKTIKIWDTTNKQCVNN), 183–223 (SDSV…LLQH), 226–265 (VHSGGVNCISFHPSDNYLVTASSDGTLKILDLLEGRLIYT), and 268–307 (GHTGPVFTVSFSKGGELFASGGADTQVLLWRTNFDELHCK). Position 321 is a phosphoserine (serine 321). The tract at residues 372-394 (PECSPTTTKKKTEDMSDLPSESQ) is disordered. A coiled-coil region spans residues 404–443 (ALEHIMEQLNVLTQTVSILEQRLTLTEDKLKDCLENQQKL).

Belongs to the WD repeat POC1 family. As to quaternary structure, interacts with POC1A. Interacts with FAM161A. Interacts with CEP44; the interaction is direct and recruits POC1B to centriolar microtubules. Forms a microtubule-associated complex with POC5, CETN2 and FAM161A. Interacts with CCDC15. In terms of processing, phosphorylated in mitotic cells that may be mediated by CDK1.

The protein localises to the cytoplasm. It localises to the cytoskeleton. Its subcellular location is the microtubule organizing center. The protein resides in the centrosome. It is found in the centriole. The protein localises to the cilium basal body. It localises to the spindle pole. In terms of biological role, plays an important role in centriole assembly and/or stability and ciliogenesis. Involved in early steps of centriole duplication, as well as in the later steps of centriole length control. Acts in concert with POC1A to ensure centriole integrity and proper mitotic spindle formation. Required for primary cilia formation, ciliary length and also cell proliferation. Required for retinal integrity. Acts as a positive regulator of centriole elongation. This Pongo abelii (Sumatran orangutan) protein is POC1 centriolar protein homolog B (POC1B).